Here is a 303-residue protein sequence, read N- to C-terminus: UDP-3-O-acyl-N-acetylglucosamine deacetylase (303 aa).

3 residues coordinate Zn(2+): histidine 78, histidine 237, and aspartate 241. Histidine 264 functions as the Proton donor in the catalytic mechanism.

This sequence belongs to the LpxC family. The cofactor is Zn(2+).

It catalyses the reaction a UDP-3-O-[(3R)-3-hydroxyacyl]-N-acetyl-alpha-D-glucosamine + H2O = a UDP-3-O-[(3R)-3-hydroxyacyl]-alpha-D-glucosamine + acetate. Its pathway is glycolipid biosynthesis; lipid IV(A) biosynthesis; lipid IV(A) from (3R)-3-hydroxytetradecanoyl-[acyl-carrier-protein] and UDP-N-acetyl-alpha-D-glucosamine: step 2/6. In terms of biological role, catalyzes the hydrolysis of UDP-3-O-myristoyl-N-acetylglucosamine to form UDP-3-O-myristoylglucosamine and acetate, the committed step in lipid A biosynthesis. This is UDP-3-O-acyl-N-acetylglucosamine deacetylase from Xanthomonas axonopodis pv. citri (strain 306).